A 715-amino-acid chain; its full sequence is MAAELPFYIASSVEELVKKHVEGVEVDKNYSIFHYLSTCNNLVKQADIYKSEGDIERTYIYSLRFCILIFEKLQKHPDFNKESFTKSRNEIKRKAELKLKELEGLKETLKKGYERIQHKKEEERKRIEREKEKERIFKQEKLKLEREQQLLREEEEQRKREDLELESEIQRLKEVEDFENRKLQAQKNIKRATSARTFELLRQEALLEERKRLQGIETEKKRILAEKQEALEKEFQQQLFEQQEKERLEKERLEKEEQLRLASLPPPPPDYSSFDSDQLLNLIENNNKKLENNNQTDDKLDNEFLLDPSFLPPPPPIITQPSPSQEKKDNNNNNNNKNTTAQLPLSITQPPHMPNNEKKLPPIYNSTSPIQFGYPSLNNSVNNPPSFSLQNNTPLIQQYKQQQQQQPIQSPTNNINRPNIPQYNNYNAKPLSSNLNPLPPQYQPQQQQQYQQQQQQQQYQQQQQYQQQQQQQQQQQQQQQHQLPKLPQYQPIENKSISANGLAQSPAVNTPSITPTTNKPNIDSSEASKKYSKLRKIIVHGEVFQEFMRLAENNTKRSIETCGILSGTLSNDVFRITTIIIPKQEGTTDTCNTIEEHEIFEYQLENDLLTLGWIHTHPTQDCFLSAVDVHTHCSYQYLLQEAIAVVISPMANPNFGIFRLTDPPGLETVQKCKLKSFHPHPPVNGIPIYTKVDHVDLIWGKKSDSKVVDLRFLKK.

Positions 86 to 302 (KSRNEIKRKA…NNQTDDKLDN (217 aa)) form a coiled coil. Positions 287–302 (NKKLENNNQTDDKLDN) are enriched in basic and acidic residues. 3 disordered regions span residues 287 to 367 (NKKL…YNST), 398 to 450 (QYKQ…QQQY), and 502 to 527 (LAQS…SSEA). Over residues 339–349 (TTAQLPLSITQ) the composition is skewed to polar residues. The span at 398–409 (QYKQQQQQQPIQ) shows a compositional bias: low complexity. Polar residues-rich tracts occupy residues 410–427 (SPTN…NNYN) and 502–525 (LAQS…IDSS). Residues 537 to 666 (IIVHGEVFQE…IFRLTDPPGL (130 aa)) enclose the MPN domain. Residues His615, His617, Asp628, His630, Cys672, His678, and His680 each contribute to the Zn(2+) site. The short motif at 615-628 (HTHPTQDCFLSAVD) is the JAMM motif element.

This sequence belongs to the peptidase M67C family. Zn(2+) serves as cofactor.

Functionally, may be a zinc metalloprotease that specifically cleaves ubiquitin chains. In Dictyostelium discoideum (Social amoeba), this protein is Probable ubiquitin thioesterase DG1039 (DG1039).